A 310-amino-acid chain; its full sequence is tRNA dimethylallyltransferase (310 aa).

11–18 (GPTAVGKT) lines the ATP pocket. 13-18 (TAVGKT) serves as a coordination point for substrate. Residues 36–39 (DSMQ) are interaction with substrate tRNA.

Belongs to the IPP transferase family. In terms of assembly, monomer. Mg(2+) is required as a cofactor.

It carries out the reaction adenosine(37) in tRNA + dimethylallyl diphosphate = N(6)-dimethylallyladenosine(37) in tRNA + diphosphate. In terms of biological role, catalyzes the transfer of a dimethylallyl group onto the adenine at position 37 in tRNAs that read codons beginning with uridine, leading to the formation of N6-(dimethylallyl)adenosine (i(6)A). This Shouchella clausii (strain KSM-K16) (Alkalihalobacillus clausii) protein is tRNA dimethylallyltransferase.